The following is a 352-amino-acid chain: Dysbindin (352 aa).

Phosphoserine is present on Ser11. Positions 88–176 form a coiled coil; it reads EKKRTSLNEL…EAFKAELDTE (89 aa). A dysbindin region spans residues 173–325; it reads LDTEHTQKAL…DEEEVQVDTA (153 aa). Residues 243–256 carry the Nuclear export signal motif; sequence LMDISDQEALDVFL. Positions 267-352 are disordered; sequence SPGVEMESNP…SDQCDSTQDI (86 aa). The segment covering 274–285 has biased composition (polar residues); sequence SNPNQNEMSLQI. Low complexity predominate over residues 286–301; sequence PSPSESASQPPASPSA. Phosphoserine occurs at positions 315, 340, and 343.

This sequence belongs to the dysbindin family. Interacts with AP3M1 and TRIM32. Interacts (isoform 1 and isoform 2 only) with the DNA-dependent protein kinase complex DNA-PK; the interaction phosphorylates DTNBP1 in vitro. Interacts directly in this complex with XRCC5 and XRCC6. Interacts with XPO1; the interaction exports DTNBP1 out of the nucleus. Component of the biogenesis of lysosome-related organelles complex 1 (BLOC-1) composed of BLOC1S1, BLOC1S2, BLOC1S3, BLOC1S4, BLOC1S5, BLOC1S6, DTNBP1/BLOC1S7 and SNAPIN/BLOC1S8. The BLOC-1 complex associates with the AP-3 protein complex and membrane protein cargos. This BLOC-1 complex also associates with the BLOC-2 complex in endosomes. Binds to DTNA and DTNB but may not be a physiological binding partner. Interacts (via its coiled coil domain) with KXD1. Interacts with AP3B2, BLOC1S5, BLOC1S6, CMYA5, PI4K2, RNF151 and SNAPIN/BLOC1S8. Interacts with XPO1; the interaction exports DTNBP1 out of the nucleus. Post-translationally, ubiquitinated by TRIM32. Ubiquitination leads to DTNBP1 degradation. As to expression, detected in brain, in hippocampus and dentate gyrus neurons. Detected at axon bundles and axon terminals, notably in the cerebellum and hippocampus. Detected in neuropil in hippocampus, lateral septum, basal ganglia and substantia nigra. Highly expressed in pyramidal cells of hippocampus CA2 and CA3. Detected at the heart and skeletal muscle sarcolemma (at protein level). Ubiquitously expressed. The highest expression is observed in testis, liver, kidney, brain, heart and lung. Expressed at lower levels in stomach and small intestine.

It is found in the cytoplasm. The protein resides in the cytoplasmic vesicle membrane. The protein localises to the endosome membrane. It localises to the melanosome membrane. Its subcellular location is the postsynaptic density. It is found in the endoplasmic reticulum. The protein resides in the nucleus. The protein localises to the cytoplasmic vesicle. It localises to the secretory vesicle. Its subcellular location is the synaptic vesicle membrane. It is found in the postsynaptic cell membrane. In terms of biological role, component of the BLOC-1 complex, a complex that is required for normal biogenesis of lysosome-related organelles (LRO), such as platelet dense granules and melanosomes. In concert with the AP-3 complex, the BLOC-1 complex is required to target membrane protein cargos into vesicles assembled at cell bodies for delivery into neurites and nerve terminals. The BLOC-1 complex, in association with SNARE proteins, is also proposed to be involved in neurite extension. Associates with the BLOC-2 complex to facilitate the transport of TYRP1 independent of AP-3 function. Plays a role in synaptic vesicle trafficking and in neurotransmitter release. Plays a role in the regulation of cell surface exposure of DRD2. May play a role in actin cytoskeleton reorganization and neurite outgrowth. May modulate MAPK8 phosphorylation. Appears to promote neuronal transmission and viability through regulating the expression of SNAP25 and SYN1, modulating PI3-kinase-Akt signaling and influencing glutamatergic release. Regulates the expression of SYN1 through binding to its promoter. Modulates prefrontal cortical activity via the dopamine/D2 pathway. This is Dysbindin (Dtnbp1) from Mus musculus (Mouse).